The chain runs to 237 residues: Phosphoribosylaminoimidazole-succinocarboxamide synthase (237 aa).

The protein belongs to the SAICAR synthetase family.

It catalyses the reaction 5-amino-1-(5-phospho-D-ribosyl)imidazole-4-carboxylate + L-aspartate + ATP = (2S)-2-[5-amino-1-(5-phospho-beta-D-ribosyl)imidazole-4-carboxamido]succinate + ADP + phosphate + 2 H(+). It functions in the pathway purine metabolism; IMP biosynthesis via de novo pathway; 5-amino-1-(5-phospho-D-ribosyl)imidazole-4-carboxamide from 5-amino-1-(5-phospho-D-ribosyl)imidazole-4-carboxylate: step 1/2. The sequence is that of Phosphoribosylaminoimidazole-succinocarboxamide synthase from Sodalis glossinidius (strain morsitans).